Consider the following 99-residue polypeptide: Beta-defensin 127 (99 aa).

A signal peptide spans methionine 1 to glutamine 20. Disulfide bonds link cysteine 24–cysteine 53, cysteine 33–cysteine 47, and cysteine 37–cysteine 54. Residues isoleucine 66–threonine 99 constitute a propeptide that is removed on maturation.

The protein belongs to the beta-defensin family.

It is found in the secreted. Has antibacterial activity. This Pan troglodytes (Chimpanzee) protein is Beta-defensin 127 (DEFB127).